We begin with the raw amino-acid sequence, 89 residues long: DNA/RNA-binding protein Alba (89 aa).

It belongs to the histone-like Alba family.

The protein resides in the cytoplasm. It is found in the chromosome. In terms of biological role, binds double-stranded DNA tightly but without sequence specificity. Involved in DNA compaction. The protein is DNA/RNA-binding protein Alba of Methanothrix thermoacetophila (strain DSM 6194 / JCM 14653 / NBRC 101360 / PT) (Methanosaeta thermophila).